The primary structure comprises 201 residues: LexA repressor (201 aa).

Residues 28-48 (RAEIAARLGFRSPNAAEEHLK) constitute a DNA-binding region (H-T-H motif). Catalysis depends on for autocatalytic cleavage activity residues S118 and K155.

Belongs to the peptidase S24 family. As to quaternary structure, homodimer.

It carries out the reaction Hydrolysis of Ala-|-Gly bond in repressor LexA.. Functionally, represses a number of genes involved in the response to DNA damage (SOS response), including recA and lexA. In the presence of single-stranded DNA, RecA interacts with LexA causing an autocatalytic cleavage which disrupts the DNA-binding part of LexA, leading to derepression of the SOS regulon and eventually DNA repair. This is LexA repressor from Photorhabdus laumondii subsp. laumondii (strain DSM 15139 / CIP 105565 / TT01) (Photorhabdus luminescens subsp. laumondii).